The sequence spans 539 residues: Tyrosine-protein kinase csk-1 (539 aa).

The SH3 domain occupies 43–110 (SPGNDVIVTR…HADCVVRING (68 aa)). The tract at residues 129 to 148 (PGAASTTSSTSSHHSTAANH) is disordered. Residues 131–146 (AASTTSSTSSHHSTAA) are compositionally biased toward low complexity. Positions 151–241 (WFHSMISREN…GLCHRLVTPI (91 aa)) constitute an SH2 domain. The Protein kinase domain maps to 283-535 (IDVGDTIGHG…GQVLQRLTTI (253 aa)). Residues 289-297 (IGHGEFGDV) and lysine 310 contribute to the ATP site. Aspartate 403 (proton acceptor) is an active-site residue.

This sequence belongs to the protein kinase superfamily. Tyr protein kinase family. CSK subfamily. Mg(2+) is required as a cofactor. The cofactor is Mn(2+). In terms of tissue distribution, expressed predominantly in pharyngeal muscles in procorpus, metacorpus and terminal bulb. Expressed also in some neurons (ASE, ADF, AVA, AUA, RMDV and BAG) in the head region, anchor cell, vulva, cells around anus, body wall muscle and gondal distal tip cells.

The catalysed reaction is L-tyrosyl-[protein] + ATP = O-phospho-L-tyrosyl-[protein] + ADP + H(+). Functionally, non-receptor tyrosine-protein kinase which plays a role in pharynx function by regulating pumping and the orientation of pharyngeal muscle fibers, independently of src-1 and src-2. May phosphorylate and thereby negatively regulate src-1 and src-2 activities. The sequence is that of Tyrosine-protein kinase csk-1 from Caenorhabditis elegans.